Here is a 233-residue protein sequence, read N- to C-terminus: RNA-free ribonuclease P (233 aa).

The protein belongs to the HARP family.

It carries out the reaction Endonucleolytic cleavage of RNA, removing 5'-extranucleotides from tRNA precursor.. RNA-free RNase P that catalyzes the removal of the 5'-leader sequence from pre-tRNA to produce the mature 5'-terminus. This Methanocaldococcus jannaschii (strain ATCC 43067 / DSM 2661 / JAL-1 / JCM 10045 / NBRC 100440) (Methanococcus jannaschii) protein is RNA-free ribonuclease P.